Consider the following 313-residue polypeptide: uncharacterized protein (313 aa).

The next 3 membrane-spanning stretches (helical) occupy residues 41-61 (LAGT…GLMV), 68-88 (VHSV…FHYF), and 102-122 (QLLL…KLVL).

The protein belongs to the cytochrome b family.

The protein localises to the mitochondrion membrane. This is an uncharacterized protein from Arabidopsis thaliana (Mouse-ear cress).